The chain runs to 122 residues: Ribonuclease P protein component (122 aa).

It belongs to the RnpA family. As to quaternary structure, consists of a catalytic RNA component (M1 or rnpB) and a protein subunit.

It catalyses the reaction Endonucleolytic cleavage of RNA, removing 5'-extranucleotides from tRNA precursor.. Functionally, RNaseP catalyzes the removal of the 5'-leader sequence from pre-tRNA to produce the mature 5'-terminus. It can also cleave other RNA substrates such as 4.5S RNA. The protein component plays an auxiliary but essential role in vivo by binding to the 5'-leader sequence and broadening the substrate specificity of the ribozyme. In Halorhodospira halophila (strain DSM 244 / SL1) (Ectothiorhodospira halophila (strain DSM 244 / SL1)), this protein is Ribonuclease P protein component.